The primary structure comprises 629 residues: tRNA uridine 5-carboxymethylaminomethyl modification enzyme MnmG (629 aa).

Residues 13–18, Val125, and Ser180 each bind FAD; that span reads GGGHAG. 273–287 lines the NAD(+) pocket; that stretch reads GPRYCPSIEDKVMRF. Gln370 is a binding site for FAD.

It belongs to the MnmG family. In terms of assembly, homodimer. Heterotetramer of two MnmE and two MnmG subunits. Requires FAD as cofactor.

It is found in the cytoplasm. In terms of biological role, NAD-binding protein involved in the addition of a carboxymethylaminomethyl (cmnm) group at the wobble position (U34) of certain tRNAs, forming tRNA-cmnm(5)s(2)U34. The protein is tRNA uridine 5-carboxymethylaminomethyl modification enzyme MnmG of Sodalis glossinidius (strain morsitans).